The primary structure comprises 417 residues: FK506-binding protein 3 (417 aa).

2 disordered regions span residues 42 to 129 (SLDD…LSPE) and 191 to 307 (EGCG…DKPK). 3 stretches are compositionally biased toward acidic residues: residues 61-84 (FDDE…EESE), 99-120 (SEEE…EFEE), and 197-222 (CACD…DASD). Basic and acidic residues-rich tracts occupy residues 236–249 (ANEK…EPKA) and 256–307 (DQKD…DKPK). Positions 331-417 (GARVGMRYIG…TFDVKLVSLK (87 aa)) constitute a PPIase FKBP-type domain.

It belongs to the FKBP-type PPIase family. FKBP3/4 subfamily.

The protein resides in the nucleus. Its subcellular location is the nucleolus. It carries out the reaction [protein]-peptidylproline (omega=180) = [protein]-peptidylproline (omega=0). Its activity is regulated as follows. Inhibited by both FK506 and rapamycin. Its function is as follows. PPIases accelerate the folding of proteins. It catalyzes the cis-trans isomerization of proline imidic peptide bonds in oligopeptides. The protein is FK506-binding protein 3 (FPR3) of Eremothecium gossypii (strain ATCC 10895 / CBS 109.51 / FGSC 9923 / NRRL Y-1056) (Yeast).